Here is a 165-residue protein sequence, read N- to C-terminus: Large ribosomal subunit protein uL10 (165 aa).

Belongs to the universal ribosomal protein uL10 family. In terms of assembly, part of the ribosomal stalk of the 50S ribosomal subunit. The N-terminus interacts with L11 and the large rRNA to form the base of the stalk. The C-terminus forms an elongated spine to which L12 dimers bind in a sequential fashion forming a multimeric L10(L12)X complex.

Forms part of the ribosomal stalk, playing a central role in the interaction of the ribosome with GTP-bound translation factors. The polypeptide is Large ribosomal subunit protein uL10 (Citrobacter koseri (strain ATCC BAA-895 / CDC 4225-83 / SGSC4696)).